We begin with the raw amino-acid sequence, 150 residues long: Cytochrome c oxidase subunit 5A, mitochondrial (150 aa).

The N-terminal 41 residues, 1–41, are a transit peptide targeting the mitochondrion; the sequence is MLGAALRRCAVAATTWAGPRGHLHSARTPGPAAAIQSVRCY. The short motif at 2-17 is the SIFI-degron element; that stretch reads LGAALRRCAVAATTWA. An N6-acetyllysine mark is found at lysine 87 and lysine 113. Position 141 is a phosphothreonine (threonine 141).

The protein belongs to the cytochrome c oxidase subunit 5A family. Component of the cytochrome c oxidase (complex IV, CIV), a multisubunit enzyme composed of 14 subunits. The complex is composed of a catalytic core of 3 subunits MT-CO1, MT-CO2 and MT-CO3, encoded in the mitochondrial DNA, and 11 supernumerary subunits COX4I, COX5A, COX5B, COX6A, COX6B, COX6C, COX7A, COX7B, COX7C, COX8 and NDUFA4, which are encoded in the nuclear genome. The complex exists as a monomer or a dimer and forms supercomplexes (SCs) in the inner mitochondrial membrane with NADH-ubiquinone oxidoreductase (complex I, CI) and ubiquinol-cytochrome c oxidoreductase (cytochrome b-c1 complex, complex III, CIII), resulting in different assemblies (supercomplex SCI(1)III(2)IV(1) and megacomplex MCI(2)III(2)IV(2)). Interacts with AFG1L. Interacts with RAB5IF. In response to mitochondrial stress, the precursor protein is ubiquitinated by the SIFI complex in the cytoplasm before mitochondrial import, leading to its degradation. Within the SIFI complex, UBR4 initiates ubiquitin chain that are further elongated or branched by KCMF1.

The protein localises to the mitochondrion inner membrane. The protein operates within energy metabolism; oxidative phosphorylation. Functionally, component of the cytochrome c oxidase, the last enzyme in the mitochondrial electron transport chain which drives oxidative phosphorylation. The respiratory chain contains 3 multisubunit complexes succinate dehydrogenase (complex II, CII), ubiquinol-cytochrome c oxidoreductase (cytochrome b-c1 complex, complex III, CIII) and cytochrome c oxidase (complex IV, CIV), that cooperate to transfer electrons derived from NADH and succinate to molecular oxygen, creating an electrochemical gradient over the inner membrane that drives transmembrane transport and the ATP synthase. Cytochrome c oxidase is the component of the respiratory chain that catalyzes the reduction of oxygen to water. Electrons originating from reduced cytochrome c in the intermembrane space (IMS) are transferred via the dinuclear copper A center (CU(A)) of subunit 2 and heme A of subunit 1 to the active site in subunit 1, a binuclear center (BNC) formed by heme A3 and copper B (CU(B)). The BNC reduces molecular oxygen to 2 water molecules using 4 electrons from cytochrome c in the IMS and 4 protons from the mitochondrial matrix. The protein is Cytochrome c oxidase subunit 5A, mitochondrial (COX5A) of Symphalangus syndactylus (Siamang).